The primary structure comprises 606 residues: tRNA 5-methylaminomethyl-2-thiouridine biosynthesis bifunctional protein MnmC (606 aa).

The interval 1-237 (MNSNSSVQFN…KRDMLCGHYL (237 aa)) is tRNA (mnm(5)s(2)U34)-methyltransferase. The tract at residues 254–606 (IGGGISAACS…RRISVSRFKG (353 aa)) is FAD-dependent cmnm(5)s(2)U34 oxidoreductase.

It in the N-terminal section; belongs to the methyltransferase superfamily. tRNA (mnm(5)s(2)U34)-methyltransferase family. This sequence in the C-terminal section; belongs to the DAO family. Requires FAD as cofactor.

Its subcellular location is the cytoplasm. The enzyme catalyses 5-aminomethyl-2-thiouridine(34) in tRNA + S-adenosyl-L-methionine = 5-methylaminomethyl-2-thiouridine(34) in tRNA + S-adenosyl-L-homocysteine + H(+). Functionally, catalyzes the last two steps in the biosynthesis of 5-methylaminomethyl-2-thiouridine (mnm(5)s(2)U) at the wobble position (U34) in tRNA. Catalyzes the FAD-dependent demodification of cmnm(5)s(2)U34 to nm(5)s(2)U34, followed by the transfer of a methyl group from S-adenosyl-L-methionine to nm(5)s(2)U34, to form mnm(5)s(2)U34. This is tRNA 5-methylaminomethyl-2-thiouridine biosynthesis bifunctional protein MnmC from Idiomarina loihiensis (strain ATCC BAA-735 / DSM 15497 / L2-TR).